Consider the following 1577-residue polypeptide: Pentafunctional AROM polypeptide (1577 aa).

A 3-dehydroquinate synthase region spans residues 1 to 384; it reads MSMKMADPTK…YEPKASVVSN (384 aa). NAD(+) contacts are provided by residues 48–50, 85–88, 116–118, and D121; these read DTN, ENSK, and GGV. Residue R132 participates in 7-phospho-2-dehydro-3-deoxy-D-arabino-heptonate binding. An NAD(+)-binding site is contributed by 141 to 142; it reads TT. Residues D148 and K154 each coordinate 7-phospho-2-dehydro-3-deoxy-D-arabino-heptonate. K163 is an NAD(+) binding site. Residue N164 participates in 7-phospho-2-dehydro-3-deoxy-D-arabino-heptonate binding. NAD(+) is bound by residues 181 to 184 and N192; that span reads FIDT. E196 is a binding site for Zn(2+). 7-phospho-2-dehydro-3-deoxy-D-arabino-heptonate is bound by residues 196 to 199 and K250; that span reads EVIK. Catalysis depends on E260, which acts as the Proton acceptor; for 3-dehydroquinate synthase activity. 7-phospho-2-dehydro-3-deoxy-D-arabino-heptonate-binding positions include 264-268 and H271; that span reads RNLLN. Zn(2+) is bound at residue H271. H275 functions as the Proton acceptor; for 3-dehydroquinate synthase activity in the catalytic mechanism. Residues H287 and K356 each contribute to the 7-phospho-2-dehydro-3-deoxy-D-arabino-heptonate site. H287 is a Zn(2+) binding site. Positions 397-842 are EPSP synthase; the sequence is VIPGVPKSLN…WDALKQKFGV (446 aa). The For EPSP synthase activity role is filled by C824. The shikimate kinase stretch occupies residues 864-1056; it reads NASVIIIGMR…RKKRLSFFVS (193 aa). Position 871–878 (871–878) interacts with ATP; it reads GMRGAGKT. Positions 1057-1277 are 3-dehydroquinase; the sequence is LTLPDLRDTG…AAPGQLSAAE (221 aa). H1180 acts as the Proton acceptor; for 3-dehydroquinate dehydratase activity in catalysis. The active-site Schiff-base intermediate with substrate; for 3-dehydroquinate dehydratase activity is K1208. The segment at 1290–1577 is shikimate dehydrogenase; sequence AKKFAIFGKP…RNAVLGTNEK (288 aa).

In the N-terminal section; belongs to the sugar phosphate cyclases superfamily. Dehydroquinate synthase family. This sequence in the 2nd section; belongs to the EPSP synthase family. It in the 3rd section; belongs to the shikimate kinase family. The protein in the 4th section; belongs to the type-I 3-dehydroquinase family. In the C-terminal section; belongs to the shikimate dehydrogenase family. Homodimer. Zn(2+) is required as a cofactor.

It localises to the cytoplasm. The catalysed reaction is 7-phospho-2-dehydro-3-deoxy-D-arabino-heptonate = 3-dehydroquinate + phosphate. It catalyses the reaction 3-dehydroquinate = 3-dehydroshikimate + H2O. It carries out the reaction shikimate + NADP(+) = 3-dehydroshikimate + NADPH + H(+). The enzyme catalyses shikimate + ATP = 3-phosphoshikimate + ADP + H(+). The catalysed reaction is 3-phosphoshikimate + phosphoenolpyruvate = 5-O-(1-carboxyvinyl)-3-phosphoshikimate + phosphate. The protein operates within metabolic intermediate biosynthesis; chorismate biosynthesis; chorismate from D-erythrose 4-phosphate and phosphoenolpyruvate: step 2/7. It functions in the pathway metabolic intermediate biosynthesis; chorismate biosynthesis; chorismate from D-erythrose 4-phosphate and phosphoenolpyruvate: step 3/7. It participates in metabolic intermediate biosynthesis; chorismate biosynthesis; chorismate from D-erythrose 4-phosphate and phosphoenolpyruvate: step 4/7. Its pathway is metabolic intermediate biosynthesis; chorismate biosynthesis; chorismate from D-erythrose 4-phosphate and phosphoenolpyruvate: step 5/7. The protein operates within metabolic intermediate biosynthesis; chorismate biosynthesis; chorismate from D-erythrose 4-phosphate and phosphoenolpyruvate: step 6/7. Its function is as follows. The AROM polypeptide catalyzes 5 consecutive enzymatic reactions in prechorismate polyaromatic amino acid biosynthesis. This chain is Pentafunctional AROM polypeptide, found in Talaromyces stipitatus (strain ATCC 10500 / CBS 375.48 / QM 6759 / NRRL 1006) (Penicillium stipitatum).